An 89-amino-acid polypeptide reads, in one-letter code: Large ribosomal subunit protein L37-2 (89 aa).

Zn(2+) is bound by residues Cys-19, Cys-22, Cys-34, and Cys-37. Residues 19 to 37 (CRRCGNSSYHLQKSKCSQC) form a C4-type zinc finger.

Belongs to the eukaryotic ribosomal protein eL37 family. Zn(2+) serves as cofactor.

In terms of biological role, binds to the 23S rRNA. This is Large ribosomal subunit protein L37-2 from Drosophila melanogaster (Fruit fly).